The chain runs to 264 residues: Thymidylate synthase (264 aa).

Arg21 provides a ligand contact to dUMP. Residue His51 participates in (6R)-5,10-methylene-5,6,7,8-tetrahydrofolate binding. DUMP is bound at residue 126-127; it reads RR. Cys146 acts as the Nucleophile in catalysis. DUMP-binding positions include 166–169, Asn177, and 207–209; these read RSAD and HLY. Residue Asp169 participates in (6R)-5,10-methylene-5,6,7,8-tetrahydrofolate binding. Ser263 contacts (6R)-5,10-methylene-5,6,7,8-tetrahydrofolate.

Belongs to the thymidylate synthase family. Bacterial-type ThyA subfamily. In terms of assembly, homodimer.

The protein resides in the cytoplasm. It carries out the reaction dUMP + (6R)-5,10-methylene-5,6,7,8-tetrahydrofolate = 7,8-dihydrofolate + dTMP. It participates in pyrimidine metabolism; dTTP biosynthesis. Its function is as follows. Catalyzes the reductive methylation of 2'-deoxyuridine-5'-monophosphate (dUMP) to 2'-deoxythymidine-5'-monophosphate (dTMP) while utilizing 5,10-methylenetetrahydrofolate (mTHF) as the methyl donor and reductant in the reaction, yielding dihydrofolate (DHF) as a by-product. This enzymatic reaction provides an intracellular de novo source of dTMP, an essential precursor for DNA biosynthesis. The polypeptide is Thymidylate synthase (Shouchella clausii (strain KSM-K16) (Alkalihalobacillus clausii)).